A 167-amino-acid chain; its full sequence is MIIYTDIISGDELLSDAYDLKLVDGVIYEADCDMVKVGGDNIDIGANPSAEDGGDDVEDGTELVNNVVHSFRLQQTAFDKKSFLTYIKGYMKEIKGRLQESNPDEVSVFEKGAQAYVKKVIGSFKDWEFFTGESMDPDGMLVLLNYREDGTTPFVAIWKHGVKAEKI.

The 167-residue stretch at 1-167 (MIIYTDIISG…WKHGVKAEKI (167 aa)) folds into the TCTP domain.

Belongs to the TCTP family.

It localises to the cytoplasm. It is found in the cytoskeleton. In terms of biological role, involved in protein synthesis. Involved in microtubule stabilization. This chain is Translationally-controlled tumor protein homolog, found in Kluyveromyces lactis (strain ATCC 8585 / CBS 2359 / DSM 70799 / NBRC 1267 / NRRL Y-1140 / WM37) (Yeast).